The chain runs to 1010 residues: 2-oxoglutarate dehydrogenase-like, mitochondrial (1010 aa).

Residues 1 to 107 constitute a mitochondrion transit peptide; sequence MSQLRLLLFR…RASVSSCTKT (107 aa). The tract at residues 28–47 is disordered; that stretch reads GGRRRSSGPPTTIPRSRGGV. Positions 130, 143, and 145 each coordinate Ca(2+). Thiamine diphosphate-binding residues include arginine 299, aspartate 398, asparagine 431, isoleucine 433, and glutamine 663. 3 residues coordinate Mg(2+): aspartate 398, asparagine 431, and isoleucine 433.

This sequence belongs to the alpha-ketoglutarate dehydrogenase family. In terms of assembly, the OGDHC complex comprises multiple copies of three catalytic enzyme components, the 2-oxoglutarate dehydrogenase (OGDH/E1), the dihydrolipoamide dehydrogenase (DLST/E2) and the dihydrolipoamide dehydrogenase (DLD/E3). OGDHL/E1-like isoenzyme may replace OGDH in the OGDHC complex in the brain. The presence of either ODGH/E1 or ODGHL/E1-like isoenzyme in the complex may depend on its tissular distribution. The cofactor is thiamine diphosphate. Mg(2+) serves as cofactor. As to expression, the OGDHL-containing OGDHC complex is present in the brain, but not in the heart.

Its subcellular location is the mitochondrion matrix. The enzyme catalyses N(6)-[(R)-lipoyl]-L-lysyl-[protein] + 2-oxoglutarate + H(+) = N(6)-[(R)-S(8)-succinyldihydrolipoyl]-L-lysyl-[protein] + CO2. 2-oxoglutarate dehydrogenase (E1-like) component of the 2-oxoglutarate dehydrogenase multienzyme complex (OGDHC) which mediates the decarboxylation of alpha-ketoglutarate in the tricarboxylic acid cycle. The OGDHC complex catalyzes the overall conversion of 2-oxoglutarate to succinyl-CoA and CO(2) while reducing NAD(+) to NADH. The OGDHC complex is mainly active in the mitochondrion. Involved in the inhibition of cell proliferation and in apoptosis. The chain is 2-oxoglutarate dehydrogenase-like, mitochondrial from Rattus norvegicus (Rat).